A 433-amino-acid polypeptide reads, in one-letter code: Enolase (433 aa).

(2R)-2-phosphoglycerate is bound at residue Q163. Catalysis depends on E205, which acts as the Proton donor. Positions 242, 291, and 318 each coordinate Mg(2+). The (2R)-2-phosphoglycerate site is built by K343, R372, S373, and K394. Residue K343 is the Proton acceptor of the active site.

It belongs to the enolase family. Mg(2+) is required as a cofactor.

It is found in the cytoplasm. The protein localises to the secreted. It localises to the cell surface. The catalysed reaction is (2R)-2-phosphoglycerate = phosphoenolpyruvate + H2O. It functions in the pathway carbohydrate degradation; glycolysis; pyruvate from D-glyceraldehyde 3-phosphate: step 4/5. In terms of biological role, catalyzes the reversible conversion of 2-phosphoglycerate (2-PG) into phosphoenolpyruvate (PEP). It is essential for the degradation of carbohydrates via glycolysis. This Methylibium petroleiphilum (strain ATCC BAA-1232 / LMG 22953 / PM1) protein is Enolase.